The sequence spans 264 residues: Small ribosomal subunit protein eS1 (264 aa).

Residue Lys-34 is modified to N6-acetyllysine; alternate. Lys-34 participates in a covalent cross-link: Glycyl lysine isopeptide (Lys-Gly) (interchain with G-Cter in SUMO2); alternate. Lys-56 is modified (N6-acetyllysine). ADP-ribosyltyrosine is present on Tyr-155. The disordered stretch occupies residues 232–264; the sequence is HGEGSSSGKATGDETGAKVERADGYEPPVQESV. Phosphoserine occurs at positions 236 and 237. Over residues 242-255 the composition is skewed to basic and acidic residues; it reads TGDETGAKVERADG. The residue at position 249 (Lys-249) is an N6-acetyllysine; alternate. Lys-249 is covalently cross-linked (Glycyl lysine isopeptide (Lys-Gly) (interchain with G-Cter in SUMO2); alternate). The residue at position 256 (Tyr-256) is a Phosphotyrosine. Ser-263 carries the phosphoserine modification.

The protein belongs to the eukaryotic ribosomal protein eS1 family. In terms of assembly, component of the small ribosomal subunit. Mature ribosomes consist of a small (40S) and a large (60S) subunit. The 40S subunit contains about 33 different proteins and 1 molecule of RNA (18S). The 60S subunit contains about 49 different proteins and 3 molecules of RNA (28S, 5.8S and 5S). Identified in a IGF2BP1-dependent mRNP granule complex containing untranslated mRNAs. Binds with high affinity to IPO4. Interacts with DDIT3. Part of the small subunit (SSU) processome, composed of more than 70 proteins and the RNA chaperone small nucleolar RNA (snoRNA) U3. In terms of processing, ADP-ribosylated at Tyr-155 by PARP1 in presence of HPF1.

The protein resides in the cytoplasm. It is found in the nucleus. Its subcellular location is the nucleolus. Component of the small ribosomal subunit. The ribosome is a large ribonucleoprotein complex responsible for the synthesis of proteins in the cell. Part of the small subunit (SSU) processome, first precursor of the small eukaryotic ribosomal subunit. During the assembly of the SSU processome in the nucleolus, many ribosome biogenesis factors, an RNA chaperone and ribosomal proteins associate with the nascent pre-rRNA and work in concert to generate RNA folding, modifications, rearrangements and cleavage as well as targeted degradation of pre-ribosomal RNA by the RNA exosome. May play a role during erythropoiesis through regulation of transcription factor DDIT3. This is Small ribosomal subunit protein eS1 from Bos taurus (Bovine).